Consider the following 359-residue polypeptide: DNA replication and repair protein RecF (359 aa).

An ATP-binding site is contributed by 30 to 37; sequence GPNGSGKT.

The protein belongs to the RecF family.

Its subcellular location is the cytoplasm. Its function is as follows. The RecF protein is involved in DNA metabolism; it is required for DNA replication and normal SOS inducibility. RecF binds preferentially to single-stranded, linear DNA. It also seems to bind ATP. This chain is DNA replication and repair protein RecF, found in Aliivibrio salmonicida (strain LFI1238) (Vibrio salmonicida (strain LFI1238)).